A 363-amino-acid chain; its full sequence is Peptide chain release factor 1 (363 aa).

Gln237 is modified (N5-methylglutamine).

Belongs to the prokaryotic/mitochondrial release factor family. Post-translationally, methylated by PrmC. Methylation increases the termination efficiency of RF1.

It is found in the cytoplasm. In terms of biological role, peptide chain release factor 1 directs the termination of translation in response to the peptide chain termination codons UAG and UAA. The sequence is that of Peptide chain release factor 1 (prfA) from Mycoplasma capricolum subsp. capricolum (strain California kid / ATCC 27343 / NCTC 10154).